The sequence spans 329 residues: Acetyl-coenzyme A carboxylase carboxyl transferase subunit alpha (329 aa).

Residues 40 to 294 (QLETLAARRR…KTSILRHLTE (255 aa)) enclose the CoA carboxyltransferase C-terminal domain.

It belongs to the AccA family. Acetyl-CoA carboxylase is a heterohexamer composed of biotin carboxyl carrier protein (AccB), biotin carboxylase (AccC) and two subunits each of ACCase subunit alpha (AccA) and ACCase subunit beta (AccD).

It is found in the cytoplasm. The catalysed reaction is N(6)-carboxybiotinyl-L-lysyl-[protein] + acetyl-CoA = N(6)-biotinyl-L-lysyl-[protein] + malonyl-CoA. It participates in lipid metabolism; malonyl-CoA biosynthesis; malonyl-CoA from acetyl-CoA: step 1/1. Functionally, component of the acetyl coenzyme A carboxylase (ACC) complex. First, biotin carboxylase catalyzes the carboxylation of biotin on its carrier protein (BCCP) and then the CO(2) group is transferred by the carboxyltransferase to acetyl-CoA to form malonyl-CoA. The protein is Acetyl-coenzyme A carboxylase carboxyl transferase subunit alpha of Prochlorococcus marinus (strain SARG / CCMP1375 / SS120).